The sequence spans 398 residues: Abhydrolase domain-containing protein 2 (398 aa).

At 1–4 (MSTA) the chain is on the cytoplasmic side. The helical; Signal-anchor for type II membrane protein transmembrane segment at 5 to 22 (FLTLIAVIVCILFRILNV) threads the bilayer. The Extracellular segment spans residues 23-398 (HSQPLKPSVW…MMHEVGKVAP (376 aa)). Positions 113 to 365 (VAICPGIANS…HGGHLGFYEG (253 aa)) constitute an AB hydrolase-1 domain. Residues Ser192, Asp328, and His359 each act as charge relay system in the active site.

It belongs to the AB hydrolase superfamily. AB hydrolase 4 family.

Its subcellular location is the membrane. The polypeptide is Abhydrolase domain-containing protein 2 (Hydr2) (Drosophila melanogaster (Fruit fly)).